The chain runs to 124 residues: MSGRGKGGKAKGKSKSRSSRAGLQFPVGRIHRLLRKGNYAERIGAGAPVYLAAVMEYLAAEVLELAGNAARDNKKTRIIPRHLQLAIRNDEELNKLLSGVTIAQGGVLPNIQAVLLPKKTQKSK.

The span at 1–18 (MSGRGKGGKAKGKSKSRS) shows a compositional bias: basic residues. The disordered stretch occupies residues 1–23 (MSGRGKGGKAKGKSKSRSSRAGL). N-acetylserine is present on Ser2. Phosphoserine is present on Ser2. Gln104 carries the post-translational modification N5-methylglutamine.

Belongs to the histone H2A family. The nucleosome is a histone octamer containing two molecules each of H2A, H2B, H3 and H4 assembled in one H3-H4 heterotetramer and two H2A-H2B heterodimers. The octamer wraps approximately 147 bp of DNA. Post-translationally, the N-terminal serine is acetylated. That serine is also phosphorylated in approximately 60% of the molecules isolated from erythrocytes.

The protein resides in the nucleus. Its subcellular location is the chromosome. Its function is as follows. Core component of nucleosome. Nucleosomes wrap and compact DNA into chromatin, limiting DNA accessibility to the cellular machineries which require DNA as a template. Histones thereby play a central role in transcription regulation, DNA repair, DNA replication and chromosomal stability. DNA accessibility is regulated via a complex set of post-translational modifications of histones, also called histone code, and nucleosome remodeling. This chain is Histone H2A, found in Sipunculus nudus (Sipunculan worm).